A 761-amino-acid chain; its full sequence is Putative pentatricopeptide repeat-containing protein At2g02150 (761 aa).

PPR repeat units lie at residues Ser141–Cys175, Gly191–Pro225, Lys226–Pro260, Thr261–Pro295, Asp296–Pro330, Asp331–Pro365, Asn366–Pro400, Asn401–Trp435, Asn436–Pro470, Asn471–Pro505, Asp506–Ala540, Asn541–Val575, Thr576–Asp606, Asn612–Pro646, Asp647–Leu681, Asp682–Pro716, and Asp717–Thr751.

This sequence belongs to the PPR family. P subfamily.

This is Putative pentatricopeptide repeat-containing protein At2g02150 from Arabidopsis thaliana (Mouse-ear cress).